Consider the following 328-residue polypeptide: Interferon regulatory factor 1 (328 aa).

Residues 5 to 113 (RMRMRPWLEM…SAVRVYRMLP (109 aa)) constitute a DNA-binding region (IRF tryptophan pentad repeat). Lysine 78 bears the N6-acetyllysine mark. Residues 92–164 (EEVKDQSRNK…STLPDDHSSY (73 aa)) are disordered. A compositionally biased stretch (low complexity) spans 141–157 (GDSSPDTLSDGLSSSTL). Residues lysine 276 and lysine 300 each participate in a glycyl lysine isopeptide (Lys-Gly) (interchain with G-Cter in SUMO) cross-link.

It belongs to the IRF family. Monomer. Homodimer. Interacts with EP300. Interacts with MYD88. Interacts with PIAS3. Interacts with SPOP. In terms of processing, phosphorylated by CK2 and this positively regulates its activity. Post-translationally, sumoylation represses the transcriptional activity and displays enhanced resistance to protein degradation. Sumoylated by UBE2I/UBC9 and SUMO1. Inactivates the tumor suppressor activity. Elevated levels in tumor cells. Major site is Lys-276. Sumoylation is enhanced by PIAS3. Desumoylated by SENP1 in tumor cells and appears to compete with ubiquitination on C-terminal sites. Ubiquitinated in a SPOP-depedent manner. Appears to compete with sumoylation on C-terminal sites.

Its subcellular location is the nucleus. The protein localises to the cytoplasm. Its activity is regulated as follows. Activated by MYD88. Its function is as follows. Transcriptional regulator which displays a remarkable functional diversity in the regulation of cellular responses. Regulates transcription of IFN and IFN-inducible genes, host response to viral and bacterial infections, regulation of many genes expressed during hematopoiesis, inflammation, immune responses and cell proliferation and differentiation, regulation of the cell cycle and induction of growth arrest and programmed cell death following DNA damage. Stimulates both innate and acquired immune responses through the activation of specific target genes and can act as a transcriptional activator and repressor regulating target genes by binding to an interferon-stimulated response element (ISRE) in their promoters. Has an essentail role in IFNG-dependent immunity to mycobacteria. Binds to a consensus sequence in gene promoters. Its target genes for transcriptional activation activity include: genes involved in anti-viral response, such as IFN-alpha/beta, RIGI, TNFSF10/TRAIL, ZBP1, OAS1/2, PIAS1/GBP, EIF2AK2/PKR and RSAD2/viperin; antibacterial response, such as GBP2, GBP5 and NOS2/INOS; anti-proliferative response, such as p53/TP53, LOX and CDKN1A; apoptosis, such as BBC3/PUMA, CASP1, CASP7 and CASP8; immune response, such as IL7, IL12A/B and IL15, PTGS2/COX2 and CYBB; DNA damage responses and DNA repair, such as POLQ/POLH; MHC class I expression, such as TAP1, PSMB9/LMP2, PSME1/PA28A, PSME2/PA28B and B2M and MHC class II expression, such as CIITA; metabolic enzymes, such as ACOD1/IRG1. Represses genes involved in anti-proliferative response, such as BIRC5/survivin, CCNB1, CCNE1, CDK1, CDK2 and CDK4 and in immune response, such as FOXP3, IL4, ANXA2 and TLR4. Stimulates p53/TP53-dependent transcription through enhanced recruitment of EP300 leading to increased acetylation of p53/TP53. Plays an important role in immune response directly affecting NK maturation and activity, macrophage production of IL12, Th1 development and maturation of CD8+ T-cells. Also implicated in the differentiation and maturation of dendritic cells and in the suppression of regulatory T (Treg) cells development. Acts as a tumor suppressor and plays a role not only in antagonism of tumor cell growth but also in stimulating an immune response against tumor cells. The chain is Interferon regulatory factor 1 (Irf1) from Rattus norvegicus (Rat).